The primary structure comprises 1183 residues: ATP-dependent helicase/nuclease subunit A (1183 aa).

A UvrD-like helicase ATP-binding domain is found at 3–461 (VQWTDEQQRA…IDLTKNFRSR (459 aa)). Residue 24-31 (AAAGSGKT) participates in ATP binding. Residues 473 to 769 (RQVMDEAVGE…RIMTIHQSKG (297 aa)) form the UvrD-like helicase C-terminal domain.

Belongs to the helicase family. AddA subfamily. Heterodimer of AddA and AddB/RexB. Mg(2+) serves as cofactor.

It catalyses the reaction Couples ATP hydrolysis with the unwinding of duplex DNA by translocating in the 3'-5' direction.. The catalysed reaction is ATP + H2O = ADP + phosphate + H(+). Its function is as follows. The heterodimer acts as both an ATP-dependent DNA helicase and an ATP-dependent, dual-direction single-stranded exonuclease. Recognizes the chi site generating a DNA molecule suitable for the initiation of homologous recombination. The AddA nuclease domain is required for chi fragment generation; this subunit has the helicase and 3' -&gt; 5' nuclease activities. This is ATP-dependent helicase/nuclease subunit A from Exiguobacterium sibiricum (strain DSM 17290 / CCUG 55495 / CIP 109462 / JCM 13490 / 255-15).